The following is a 265-amino-acid chain: MPQTPSTRWCPTPEQLMILEEMYRSGVRTPNAAEIQQITAHLAYYGRIEGKNVFYWFQNHKARERQRLRRRLCARHQQQYAQQQQQATAAAPASSPNSSATLLAPPAAGGSSAPCVHPAVMQLHHHHHPYATSFSMPHLGYLGQQAATVTPVLNPAAAGMVDLAGAGAGNRATGAGGAYGGGAGLYNSCSSNQLEVWDATEPMDHCNASCGAASGSSDEGGAAHLQLPACCRRPLKTLDLFPTKSTGLKDECSSSKSSSCSTSTN.

The homeobox; WUS-type DNA-binding region spans 4 to 68 (TPSTRWCPTP…NHKARERQRL (65 aa)). Disordered regions lie at residues 77–107 (QQQYAQQQQQATAAAPASSPNSSATLLAPPA) and 242–265 (PTKSTGLKDECSSSKSSSCSTSTN). Low complexity predominate over residues 254–265 (SSKSSSCSTSTN).

The protein belongs to the WUS homeobox family. In terms of tissue distribution, predominantly expressed in tissues enriched for shoot meristems and young lateral organ primordia. First expressed in lateral domains of shoot meristems. It is then expressed in the margins of young lateral organ primordia. Not expressed in roots, seedling leaves or fully expanded coleoptiles. Also expressed in vegetative shoot apices (five leaf primordia and the SAM) and in the male inflorescence. Expressed at high level in the female inflorescence.

Its subcellular location is the nucleus. Probable transcription factor required to initiate organ founder cells in a lateral domain of shoot meristems. Involved in leaf formation. This Zea mays (Maize) protein is WUSCHEL-related homeobox 3B (WOX3B).